A 316-amino-acid chain; its full sequence is Transaldolase (316 aa).

K132 functions as the Schiff-base intermediate with substrate in the catalytic mechanism.

This sequence belongs to the transaldolase family. Type 1 subfamily. As to quaternary structure, homodimer.

It localises to the cytoplasm. The enzyme catalyses D-sedoheptulose 7-phosphate + D-glyceraldehyde 3-phosphate = D-erythrose 4-phosphate + beta-D-fructose 6-phosphate. Its pathway is carbohydrate degradation; pentose phosphate pathway; D-glyceraldehyde 3-phosphate and beta-D-fructose 6-phosphate from D-ribose 5-phosphate and D-xylulose 5-phosphate (non-oxidative stage): step 2/3. In terms of biological role, transaldolase is important for the balance of metabolites in the pentose-phosphate pathway. In Vibrio cholerae serotype O1 (strain ATCC 39541 / Classical Ogawa 395 / O395), this protein is Transaldolase.